The following is a 449-amino-acid chain: Glucose-6-phosphate isomerase (449 aa).

Catalysis depends on glutamate 291, which acts as the Proton donor. Active-site residues include histidine 312 and lysine 426.

It belongs to the GPI family.

The protein resides in the cytoplasm. It catalyses the reaction alpha-D-glucose 6-phosphate = beta-D-fructose 6-phosphate. It functions in the pathway carbohydrate biosynthesis; gluconeogenesis. The protein operates within carbohydrate degradation; glycolysis; D-glyceraldehyde 3-phosphate and glycerone phosphate from D-glucose: step 2/4. Functionally, catalyzes the reversible isomerization of glucose-6-phosphate to fructose-6-phosphate. In Streptococcus pyogenes serotype M28 (strain MGAS6180), this protein is Glucose-6-phosphate isomerase.